A 65-amino-acid chain; its full sequence is Gallinacin-1 (65 aa).

A signal peptide spans 1-19 (MRIVYLLLPFILLLAQGAA). The propeptide occupies 20–25 (GSSQAL). Intrachain disulfides connect cysteine 31–cysteine 59, cysteine 38–cysteine 53, and cysteine 43–cysteine 60.

This sequence belongs to the beta-defensin family. Strong expression in the bone marrow, lung, testis. Moderate expression in the bursa and intestine. Low expression in the cloaca, gall bladder, brain and pancreas. Expressed in the vagina, ovarian stroma and the theca and granulosa layers of the ovarian follicle.

Its subcellular location is the secreted. It localises to the cytoplasmic granule. Its function is as follows. Has bactericidal activity. Potent activity against E.coli ML-35, L.monocytogenes EGD and C.albicans. The protein is Gallinacin-1 (GAL1) of Gallus gallus (Chicken).